A 695-amino-acid chain; its full sequence is Probable pre-mRNA-splicing factor ATP-dependent RNA helicase DEAH9 (695 aa).

The Helicase ATP-binding domain occupies 58–223 (LYLVENHATT…FNSSKKRHAP (166 aa)). ATP is bound at residue 71–78 (GETGSGKT). Residues 170–173 (DEAH) carry the DEAH box motif. Positions 261-438 (SVVSTILLIN…STVIQLKALG (178 aa)) constitute a Helicase C-terminal domain.

This sequence belongs to the DEAD box helicase family. DEAH subfamily. DDX35 sub-subfamily.

The enzyme catalyses ATP + H2O = ADP + phosphate + H(+). May be involved in pre-mRNA splicing. This Arabidopsis thaliana (Mouse-ear cress) protein is Probable pre-mRNA-splicing factor ATP-dependent RNA helicase DEAH9.